A 172-amino-acid polypeptide reads, in one-letter code: Acetolactate synthase small subunit (172 aa).

Residues 4-78 (TLSVLVEDEA…NVIKVQDITE (75 aa)) enclose the ACT domain.

It belongs to the acetolactate synthase small subunit family. As to quaternary structure, dimer of large and small chains.

The catalysed reaction is 2 pyruvate + H(+) = (2S)-2-acetolactate + CO2. Its pathway is amino-acid biosynthesis; L-isoleucine biosynthesis; L-isoleucine from 2-oxobutanoate: step 1/4. It functions in the pathway amino-acid biosynthesis; L-valine biosynthesis; L-valine from pyruvate: step 1/4. This chain is Acetolactate synthase small subunit (ilvH), found in Synechocystis sp. (strain ATCC 27184 / PCC 6803 / Kazusa).